The chain runs to 212 residues: ATP phosphoribosyltransferase (212 aa).

Belongs to the ATP phosphoribosyltransferase family. Short subfamily. Heteromultimer composed of HisG and HisZ subunits.

It is found in the cytoplasm. It carries out the reaction 1-(5-phospho-beta-D-ribosyl)-ATP + diphosphate = 5-phospho-alpha-D-ribose 1-diphosphate + ATP. Its pathway is amino-acid biosynthesis; L-histidine biosynthesis; L-histidine from 5-phospho-alpha-D-ribose 1-diphosphate: step 1/9. Functionally, catalyzes the condensation of ATP and 5-phosphoribose 1-diphosphate to form N'-(5'-phosphoribosyl)-ATP (PR-ATP). Has a crucial role in the pathway because the rate of histidine biosynthesis seems to be controlled primarily by regulation of HisG enzymatic activity. The polypeptide is ATP phosphoribosyltransferase (Geobacter metallireducens (strain ATCC 53774 / DSM 7210 / GS-15)).